The chain runs to 361 residues: Aminomethyltransferase (361 aa).

Belongs to the GcvT family. The glycine cleavage system is composed of four proteins: P, T, L and H.

The enzyme catalyses N(6)-[(R)-S(8)-aminomethyldihydrolipoyl]-L-lysyl-[protein] + (6S)-5,6,7,8-tetrahydrofolate = N(6)-[(R)-dihydrolipoyl]-L-lysyl-[protein] + (6R)-5,10-methylene-5,6,7,8-tetrahydrofolate + NH4(+). In terms of biological role, the glycine cleavage system catalyzes the degradation of glycine. The polypeptide is Aminomethyltransferase (Bacteroides fragilis (strain ATCC 25285 / DSM 2151 / CCUG 4856 / JCM 11019 / LMG 10263 / NCTC 9343 / Onslow / VPI 2553 / EN-2)).